We begin with the raw amino-acid sequence, 143 residues long: HTH-type transcriptional regulator CueR (143 aa).

Positions Thr11–Asn79 constitute an HTH merR-type domain. The segment at residues Ile14–Asn33 is a DNA-binding region (H-T-H motif).

Functionally, transcriptional activator of the copZA operon. This Bacillus subtilis (strain 168) protein is HTH-type transcriptional regulator CueR (cueR).